The chain runs to 961 residues: Glycine dehydrogenase (decarboxylating) (961 aa).

Lys709 bears the N6-(pyridoxal phosphate)lysine mark.

This sequence belongs to the GcvP family. In terms of assembly, the glycine cleavage system is composed of four proteins: P, T, L and H. Requires pyridoxal 5'-phosphate as cofactor.

It carries out the reaction N(6)-[(R)-lipoyl]-L-lysyl-[glycine-cleavage complex H protein] + glycine + H(+) = N(6)-[(R)-S(8)-aminomethyldihydrolipoyl]-L-lysyl-[glycine-cleavage complex H protein] + CO2. The glycine cleavage system catalyzes the degradation of glycine. The P protein binds the alpha-amino group of glycine through its pyridoxal phosphate cofactor; CO(2) is released and the remaining methylamine moiety is then transferred to the lipoamide cofactor of the H protein. The chain is Glycine dehydrogenase (decarboxylating) from Streptomyces griseus subsp. griseus (strain JCM 4626 / CBS 651.72 / NBRC 13350 / KCC S-0626 / ISP 5235).